We begin with the raw amino-acid sequence, 194 residues long: NAD(P)H-quinone oxidoreductase subunit I (194 aa).

4Fe-4S ferredoxin-type domains lie at 55–84 and 95–124; these read GRIHYEFDKCIACEVCVRVCPINLPVVDWE and NHYSIDFGVCIFCGNCVEYCPTNCLSMTEE. The [4Fe-4S] cluster site is built by Cys-64, Cys-67, Cys-70, Cys-74, Cys-104, Cys-107, Cys-110, and Cys-114. A disordered region spans residues 173 to 194; that stretch reads DLPANAPRPGARPEDLVEKTEA. Positions 183–194 are enriched in basic and acidic residues; it reads ARPEDLVEKTEA.

This sequence belongs to the complex I 23 kDa subunit family. NDH-1 is composed of at least 11 different subunits. [4Fe-4S] cluster serves as cofactor.

It localises to the cellular thylakoid membrane. It catalyses the reaction a plastoquinone + NADH + (n+1) H(+)(in) = a plastoquinol + NAD(+) + n H(+)(out). The enzyme catalyses a plastoquinone + NADPH + (n+1) H(+)(in) = a plastoquinol + NADP(+) + n H(+)(out). In terms of biological role, NDH-1 shuttles electrons from an unknown electron donor, via FMN and iron-sulfur (Fe-S) centers, to quinones in the respiratory and/or the photosynthetic chain. The immediate electron acceptor for the enzyme in this species is believed to be plastoquinone. Couples the redox reaction to proton translocation, and thus conserves the redox energy in a proton gradient. The protein is NAD(P)H-quinone oxidoreductase subunit I of Nostoc sp. (strain PCC 7120 / SAG 25.82 / UTEX 2576).